The primary structure comprises 351 residues: Nicotinate-nucleotide--dimethylbenzimidazole phosphoribosyltransferase (351 aa).

Residue Glu-317 is the Proton acceptor of the active site.

This sequence belongs to the CobT family.

It catalyses the reaction 5,6-dimethylbenzimidazole + nicotinate beta-D-ribonucleotide = alpha-ribazole 5'-phosphate + nicotinate + H(+). The protein operates within nucleoside biosynthesis; alpha-ribazole biosynthesis; alpha-ribazole from 5,6-dimethylbenzimidazole: step 1/2. Functionally, catalyzes the synthesis of alpha-ribazole-5'-phosphate from nicotinate mononucleotide (NAMN) and 5,6-dimethylbenzimidazole (DMB). The polypeptide is Nicotinate-nucleotide--dimethylbenzimidazole phosphoribosyltransferase (Pseudomonas aeruginosa (strain UCBPP-PA14)).